The chain runs to 261 residues: Undecaprenyl-diphosphatase (261 aa).

The next 8 helical transmembrane spans lie at 1-21 (MNYI…FLPV), 41-61 (FTKL…VVLY), 69-89 (LDFY…GLLF), 95-115 (ALLE…IILL), 129-149 (ITYL…IPGV), 169-186 (AAEF…GATL), 206-226 (ILII…KTFI), and 241-261 (RIVA…LTLI).

This sequence belongs to the UppP family.

It localises to the cell inner membrane. The catalysed reaction is di-trans,octa-cis-undecaprenyl diphosphate + H2O = di-trans,octa-cis-undecaprenyl phosphate + phosphate + H(+). Catalyzes the dephosphorylation of undecaprenyl diphosphate (UPP). Confers resistance to bacitracin. This chain is Undecaprenyl-diphosphatase, found in Flavobacterium psychrophilum (strain ATCC 49511 / DSM 21280 / CIP 103535 / JIP02/86).